Here is a 448-residue protein sequence, read N- to C-terminus: Phosphoglucosamine mutase (448 aa).

S102 acts as the Phosphoserine intermediate in catalysis. Mg(2+) is bound by residues S102, D242, D244, and D246. At S102 the chain carries Phosphoserine.

This sequence belongs to the phosphohexose mutase family. Requires Mg(2+) as cofactor. In terms of processing, activated by phosphorylation.

The enzyme catalyses alpha-D-glucosamine 1-phosphate = D-glucosamine 6-phosphate. Catalyzes the conversion of glucosamine-6-phosphate to glucosamine-1-phosphate. This chain is Phosphoglucosamine mutase, found in Brevibacillus brevis (strain 47 / JCM 6285 / NBRC 100599).